Here is a 769-residue protein sequence, read N- to C-terminus: Protein lethal(2)denticleless (769 aa).

6 WD repeats span residues 99–129 (CHFN…RLWE), 143–174 (GHTR…LIWD), 194–249 (GHTG…KVWD), 264–303 (RHKL…YCYN), 320–349 (NSTF…YIWN), and 362–393 (GHTV…KIWR). Residues 196-221 (TGGPGTPVSQRKQRTRTPKMAGGTTS) form a disordered region. Residue Thr201 is modified to Phosphothreonine. Ser204 is subject to Phosphoserine. 3 disordered regions span residues 448 to 467 (RLMD…TTKR), 476 to 562 (AGQE…HVYT), and 655 to 769 (SPRL…VGSD). A Phosphothreonine modification is found at Thr456. Residue Ser459 is modified to Phosphoserine. The segment covering 503 to 518 (PSSQETACRHIQLQSI) has biased composition (polar residues). A Phosphoserine modification is found at Ser524. Residues 524 to 533 (SPSKRQKENS) are compositionally biased toward basic and acidic residues. The span at 546 to 562 (STPSHSPLSENVNHVYT) shows a compositional bias: polar residues. Residue Ser655 is modified to Phosphoserine. Positions 657 to 666 (RLQSLRQSEC) are enriched in polar residues. Ser679, Ser691, and Ser711 each carry phosphoserine. A compositionally biased stretch (low complexity) spans 689 to 704 (AGSSSHSHSQSQPKTP). Positions 705 to 714 (TSSRRNSETT) are enriched in polar residues. The segment covering 728-743 (PAEETTTTNAAPSSSD) has biased composition (low complexity). Residues 758-769 (SMRTPTTAVGSD) are compositionally biased toward polar residues.

Belongs to the WD repeat cdt2 family. Component of the DCX(DTL) E3 ubiquitin ligase complex, at least composed of Cul-4, pic/DDB1, l(2)dtl/CDT2 and Roc1a. As to expression, ubiquitously expressed during embryogenesis with no sign of tissue specificity in expression up to stage 17.

The protein localises to the cytoplasm. Its pathway is protein modification; protein ubiquitination. In terms of biological role, substrate-specific adapter of a DCX (DDB1-CUL4-X-box) E3 ubiquitin-protein ligase complex required for cell cycle control. The DCX(DTL) complex, also named CRL4(CDT2) complex, mediates the polyubiquitination and subsequent degradation of E2f during S phase. E2f degradation is necessary to ensure proper development. Substrates require their interaction with PCNA for their polyubiquitination: substrates interact with PCNA via their PIP-box, leading to recruit the DCX(DTL) complex. The polypeptide is Protein lethal(2)denticleless (l(2)dtl) (Drosophila melanogaster (Fruit fly)).